The chain runs to 484 residues: Protein nucleotidyltransferase YdiU (484 aa).

Residues Gly87, Gly89, Arg90, Lys110, Asp122, Gly123, Arg173, and Arg180 each contribute to the ATP site. Residue Asp249 is the Proton acceptor of the active site. The Mg(2+) site is built by Asn250 and Asp259. Position 259 (Asp259) interacts with ATP.

This sequence belongs to the SELO family. Mg(2+) is required as a cofactor. The cofactor is Mn(2+).

It carries out the reaction L-seryl-[protein] + ATP = 3-O-(5'-adenylyl)-L-seryl-[protein] + diphosphate. It catalyses the reaction L-threonyl-[protein] + ATP = 3-O-(5'-adenylyl)-L-threonyl-[protein] + diphosphate. The enzyme catalyses L-tyrosyl-[protein] + ATP = O-(5'-adenylyl)-L-tyrosyl-[protein] + diphosphate. The catalysed reaction is L-histidyl-[protein] + UTP = N(tele)-(5'-uridylyl)-L-histidyl-[protein] + diphosphate. It carries out the reaction L-seryl-[protein] + UTP = O-(5'-uridylyl)-L-seryl-[protein] + diphosphate. It catalyses the reaction L-tyrosyl-[protein] + UTP = O-(5'-uridylyl)-L-tyrosyl-[protein] + diphosphate. Nucleotidyltransferase involved in the post-translational modification of proteins. It can catalyze the addition of adenosine monophosphate (AMP) or uridine monophosphate (UMP) to a protein, resulting in modifications known as AMPylation and UMPylation. The polypeptide is Protein nucleotidyltransferase YdiU (Alcanivorax borkumensis (strain ATCC 700651 / DSM 11573 / NCIMB 13689 / SK2)).